We begin with the raw amino-acid sequence, 82 residues long: Hepcidin (82 aa).

A signal peptide spans 1 to 23 (MALSVQIRAACLLLLLLVSLTAG). Residues 24 to 53 (SVLPSQTRQLTDLRTQDTAGATAGLTPVAQ) constitute a propeptide that is removed on maturation. 4 disulfides stabilise this stretch: Cys64/Cys80, Cys67/Cys70, Cys68/Cys76, and Cys71/Cys79.

Belongs to the hepcidin family. In terms of assembly, interacts with SLC40A1; this interaction promotes SLC40A1 rapid ubiquitination.

It localises to the secreted. Liver-produced hormone that constitutes the main circulating regulator of iron absorption and distribution across tissues. Acts by promoting endocytosis and degradation of ferroportin/SLC40A1, leading to the retention of iron in iron-exporting cells and decreased flow of iron into plasma. Controls the major flows of iron into plasma: absorption of dietary iron in the intestine, recycling of iron by macrophages, which phagocytose old erythrocytes and other cells, and mobilization of stored iron from hepatocytes. Its function is as follows. Has strong antimicrobial activity against E.coli ML35P N.cinerea and weaker against S.epidermidis, S.aureus and group b streptococcus bacteria. Active against the fungus C.albicans. No activity against P.aeruginosa. This Sus scrofa (Pig) protein is Hepcidin (HAMP).